Consider the following 271-residue polypeptide: Ribosomal RNA small subunit methyltransferase A (271 aa).

Positions 11, 13, 38, 58, 86, and 101 each coordinate S-adenosyl-L-methionine.

This sequence belongs to the class I-like SAM-binding methyltransferase superfamily. rRNA adenine N(6)-methyltransferase family. RsmA subfamily.

The protein localises to the cytoplasm. It catalyses the reaction adenosine(1518)/adenosine(1519) in 16S rRNA + 4 S-adenosyl-L-methionine = N(6)-dimethyladenosine(1518)/N(6)-dimethyladenosine(1519) in 16S rRNA + 4 S-adenosyl-L-homocysteine + 4 H(+). Functionally, specifically dimethylates two adjacent adenosines (A1518 and A1519) in the loop of a conserved hairpin near the 3'-end of 16S rRNA in the 30S particle. May play a critical role in biogenesis of 30S subunits. The chain is Ribosomal RNA small subunit methyltransferase A from Helicobacter pylori (strain ATCC 700392 / 26695) (Campylobacter pylori).